Reading from the N-terminus, the 477-residue chain is ACT domain-containing protein ACR1 (477 aa).

4 consecutive ACT domains span residues 38–124 (LIKV…REVQ), 134–214 (AFEI…GDVS), 283–358 (MVNV…RASQ), and 361–441 (KLEI…MMPR). The Bipartite nuclear localization signal signature appears at 329 to 345 (KKNGGTLETEGQRERLR).

In terms of tissue distribution, expressed in flowers and siliques.

It is found in the nucleus. In terms of biological role, may bind amino acids. This Arabidopsis thaliana (Mouse-ear cress) protein is ACT domain-containing protein ACR1.